The chain runs to 427 residues: L-glutamine:2-deoxy-scyllo-inosose aminotransferase (427 aa).

A disordered region spans residues 1-20 (MPLQSSRLAVDNGTPVRGKP). Lys-205 is modified (N6-(pyridoxal phosphate)lysine).

This sequence belongs to the DegT/DnrJ/EryC1 family. L-glutamine:2-deoxy-scyllo-inosose/scyllo-inosose aminotransferase subfamily. Requires pyridoxal 5'-phosphate as cofactor.

It catalyses the reaction 2-deoxy-L-scyllo-inosose + L-glutamine = 2-deoxy-scyllo-inosamine + 2-oxoglutaramate. The enzyme catalyses 3-amino-2,3-dideoxy-scyllo-inosose + L-glutamine = 2-deoxystreptamine + 2-oxoglutaramate. The protein operates within metabolic intermediate biosynthesis; 2-deoxystreptamine biosynthesis; 2-deoxystreptamine from D-glucose 6-phosphate: step 2/4. It functions in the pathway antibiotic biosynthesis; kanamycin biosynthesis. Catalyzes the PLP-dependent transamination of 2-deoxy-scyllo-inosose (2-DOI) to form 2-deoxy-scyllo-inosamine (2-DOIA) using L-glutamine as the amino donor. Also catalyzes the transamination of 3-amino-2,3-dideoxy-scyllo-inosose (keto-2-DOIA) into 2-deoxystreptamine (2-DOS). In Streptomyces kanamyceticus, this protein is L-glutamine:2-deoxy-scyllo-inosose aminotransferase (kanB).